The primary structure comprises 106 residues: RxLR effector protein PSR1 (106 aa).

The first 20 residues, 1-20 (MRLTYVLLVAVTTLLVSCDA), serve as a signal peptide directing secretion. The RxLR-dEER signature appears at 33–46 (RLLRFVEAADEEER). Residues 50–106 (FSPEKLRKMLGDETYRLKKFGKWDSDGHTFDGLKHYLLLSDSSMVKLRNMYKAWLEQ) form a WY domain region. Residues 56 to 69 (RKMLGDETYRLKKF) carry the Bipartite nuclear localization signal (NLS) motif.

Belongs to the RxLR effector family. In terms of assembly, interacts with host PINP1.

The protein resides in the secreted. It is found in the host nucleus. Its function is as follows. Secreted effector that possesses RNA silencing suppression activity by inhibiting the biogenesis of small RNAs in the host plant to promote enhanced susceptibility of host to the pathogen during infection. Interferes with secondary siRNA production by associating with host nuclear protein PINP1 that acts as a regulator of the accumulation of both microRNAs and endogenous small interfering RNAs. This Phytophthora sojae (Soybean stem and root rot agent) protein is RxLR effector protein PSR1.